Reading from the N-terminus, the 374-residue chain is Chaperone protein DnaJ (374 aa).

The region spanning 4 to 68 is the J domain; sequence DYYEILGVSR…EMKARFDRFG (65 aa). The segment at 132-214 adopts a CR-type zinc-finger fold; sequence GGDKELTIKH…CGGRGQKEAT (83 aa). 8 residues coordinate Zn(2+): Cys145, Cys148, Cys162, Cys165, Cys188, Cys191, Cys202, and Cys205. CXXCXGXG motif repeat units lie at residues 145-152, 162-169, 188-195, and 202-209; these read CGTCNGSG, CSTCGGTG, CPSCNGSG, and CVDCGGRG.

It belongs to the DnaJ family. In terms of assembly, homodimer. Zn(2+) is required as a cofactor.

Its subcellular location is the cytoplasm. In terms of biological role, participates actively in the response to hyperosmotic and heat shock by preventing the aggregation of stress-denatured proteins and by disaggregating proteins, also in an autonomous, DnaK-independent fashion. Unfolded proteins bind initially to DnaJ; upon interaction with the DnaJ-bound protein, DnaK hydrolyzes its bound ATP, resulting in the formation of a stable complex. GrpE releases ADP from DnaK; ATP binding to DnaK triggers the release of the substrate protein, thus completing the reaction cycle. Several rounds of ATP-dependent interactions between DnaJ, DnaK and GrpE are required for fully efficient folding. Also involved, together with DnaK and GrpE, in the DNA replication of plasmids through activation of initiation proteins. In Trichodesmium erythraeum (strain IMS101), this protein is Chaperone protein DnaJ.